The chain runs to 422 residues: Elongation factor 1-alpha (422 aa).

The tr-type G domain maps to 5 to 221; that stretch reads KPHQNLAVIG…NDLPEPQPPT (217 aa). Residues 14 to 21 form a G1 region; sequence GHVDHGKS. Residue 14–21 coordinates GTP; sequence GHVDHGKS. Ser21 is a Mg(2+) binding site. Residues 70 to 74 are G2; that stretch reads GVTID. The G3 stretch occupies residues 91–94; that stretch reads DCPG. GTP is bound by residues 91–95 and 146–149; these read DCPGH and NKMD. The tract at residues 146 to 149 is G4; the sequence is NKMD. The G5 stretch occupies residues 185–187; the sequence is SAF.

This sequence belongs to the TRAFAC class translation factor GTPase superfamily. Classic translation factor GTPase family. EF-Tu/EF-1A subfamily.

The protein resides in the cytoplasm. It carries out the reaction GTP + H2O = GDP + phosphate + H(+). Its function is as follows. GTP hydrolase that promotes the GTP-dependent binding of aminoacyl-tRNA to the A-site of ribosomes during protein biosynthesis. The polypeptide is Elongation factor 1-alpha (Natronomonas pharaonis (strain ATCC 35678 / DSM 2160 / CIP 103997 / JCM 8858 / NBRC 14720 / NCIMB 2260 / Gabara) (Halobacterium pharaonis)).